The primary structure comprises 131 residues: Plastocyanin (131 aa).

The N-terminal stretch at 1-34 (MKFFASLSKRFAPVLSLVVLVAGTLLLSAAPASA) is a signal peptide. Positions 35–131 (ATVQIKMGTD…AGMVGTITVE (97 aa)) constitute a Plastocyanin-like domain. Residues His73, Cys116, His119, and Met124 each contribute to the Cu cation site.

This sequence belongs to the plastocyanin family. Cu(2+) serves as cofactor.

The protein localises to the cellular thylakoid membrane. Functionally, participates in electron transfer between P700 and the cytochrome b6-f complex in photosystem I. The polypeptide is Plastocyanin (petE) (Prochlorothrix hollandica).